A 359-amino-acid chain; its full sequence is Peptide chain release factor 1 (359 aa).

Q236 is modified (N5-methylglutamine).

It belongs to the prokaryotic/mitochondrial release factor family. Methylated by PrmC. Methylation increases the termination efficiency of RF1.

It localises to the cytoplasm. Its function is as follows. Peptide chain release factor 1 directs the termination of translation in response to the peptide chain termination codons UAG and UAA. The sequence is that of Peptide chain release factor 1 from Lacticaseibacillus casei (strain BL23) (Lactobacillus casei).